The sequence spans 663 residues: Rap1 GTPase-activating protein 1 (663 aa).

Positions 1-17 (MIEKMQGSRMDEQRCSF) constitute a GoLoco domain. Residues 1–23 (MIEKMQGSRMDEQRCSFPPPLKT) form a disordered region. Position 17 is a phosphoserine (phenylalanine 17). One can recognise a Rap-GAP domain in the interval 181–397 (IVTFDEHVIS…RTRAALLETL (217 aa)). Serine 441 carries the post-translational modification Phosphoserine. Disordered regions lie at residues 442–604 (MDAM…PHKR) and 616–645 (SVST…PACP). Residues 450-465 (KKPNTVSTSHSGSFAP) show a composition bias toward polar residues. Residues serine 484, serine 499, serine 515, serine 541, and serine 542 each carry the phosphoserine modification. The span at 535 to 549 (ENSSTQSSPEMPTTK) shows a compositional bias: polar residues. A compositionally biased stretch (low complexity) spans 567-579 (RSSSSASSFASVV). Over residues 580–591 (EETEGVDGEDTG) the composition is skewed to acidic residues. Over residues 616 to 630 (SVSTTSGGSSPGPSR) the composition is skewed to low complexity.

In terms of assembly, homodimer and heterodimer with RAP1B. In terms of tissue distribution, significant expression seen in the brain, kidney and pancreas. Abundant in the cerebral cortex and expressed at much lower levels in the spinal cord. Not detected in the lymphoid tissues.

It localises to the golgi apparatus membrane. In terms of biological role, GTPase activator for the nuclear Ras-related regulatory protein RAP-1A (KREV-1), converting it to the putatively inactive GDP-bound state. The sequence is that of Rap1 GTPase-activating protein 1 (RAP1GAP) from Homo sapiens (Human).